The sequence spans 151 residues: UPF0178 protein Tcr_1995 (151 aa).

A disordered region spans residues 116-135 (RSSGVDTGGPPPLNQKDRQA).

It belongs to the UPF0178 family.

In Hydrogenovibrio crunogenus (strain DSM 25203 / XCL-2) (Thiomicrospira crunogena), this protein is UPF0178 protein Tcr_1995.